The following is a 363-amino-acid chain: Homeobox protein DTH-2 (363 aa).

Positions 133–192 (RRKRRILFSQAQIYELERRFKQQKYLSAPEREHLANLINLTPTQVKIWFQNHRYKCKRSQ) form a DNA-binding region, homeobox. The tract at residues 189-246 (KRSQKDKEKEQQKEKSYHLKKNIVDDKERSPNKQICNASSSDRSTPEEPVAKAKESGL) is disordered. The span at 191–219 (SQKDKEKEQQKEKSYHLKKNIVDDKERSP) shows a compositional bias: basic and acidic residues. The span at 220-231 (NKQICNASSSDR) shows a compositional bias: polar residues. Residues 232–246 (STPEEPVAKAKESGL) show a composition bias toward basic and acidic residues.

Belongs to the NK-2 homeobox family. Intestine and unidentified peripheral parenchymal cells. Slightly higher levels in the cephalic region compared to other body regions.

The protein resides in the nucleus. In terms of biological role, this protein might be involved in determination and/or differentiation of nerve cells in the continuous replacement of neurons in the cephalic region. The polypeptide is Homeobox protein DTH-2 (DTH-2) (Girardia tigrina (Planarian)).